Here is a 471-residue protein sequence, read N- to C-terminus: PE-PGRS family protein PE_PGRS33 (471 aa).

The segment at 1 to 30 (MSFVVTIPEALAAVATDLAGIGSTIGTANA) is essential for translocation to the cell surface. A PE domain is found at 1 to 93 (MSFVVTIPEA…AGSYAAAEAA (93 aa)). The tract at residues 140–230 (GNGGAGGSGA…GLFFGVGGAG (91 aa)) is interacts with TLR2.

The protein belongs to the mycobacterial PE family. PGRS subfamily. As to quaternary structure, interacts with human TLR2.

It localises to the secreted. Its subcellular location is the cell wall. It is found in the cell surface. The protein resides in the cell outer membrane. Functionally, induces TNF-alpha release through human Toll-like receptor 2 (TLR2) signaling pathway, leading to macrophage apoptosis. This Mycobacterium tuberculosis (strain CDC 1551 / Oshkosh) protein is PE-PGRS family protein PE_PGRS33 (PE_PGRS33).